We begin with the raw amino-acid sequence, 200 residues long: Guanylate kinase (200 aa).

The region spanning 6-184 (GLLIVLSGPS…AVDKLKSILL (179 aa)) is the Guanylate kinase-like domain. An ATP-binding site is contributed by 13–20 (GPSGAGKG).

It belongs to the guanylate kinase family.

It is found in the cytoplasm. It carries out the reaction GMP + ATP = GDP + ADP. Essential for recycling GMP and indirectly, cGMP. The sequence is that of Guanylate kinase from Desulfitobacterium hafniense (strain Y51).